A 110-amino-acid chain; its full sequence is uncharacterized protein (110 aa).

This is an uncharacterized protein from Yersinia enterocolitica.